Here is a 316-residue protein sequence, read N- to C-terminus: Calumenin-B (316 aa).

The N-terminal stretch at 1 to 19 (MELRPLVMCFALCVVYASS) is a signal peptide. EF-hand domains are found at residues 69–104 (ESKE…SQKR), 105–140 (WIYD…YILD), 152–187 (QMIS…EEYD), 189–224 (MKDI…QEGD), 230–265 (WVRT…SDYD), and 266–301 (HAEA…FVGS). The Ca(2+) site is built by Asp82, Asp84, Asp86, Tyr88, Glu93, Asp118, Asn120, Asp122, and Glu129. The N-linked (GlcNAc...) asparagine glycan is linked to Asn132. Residues Asp165, Asp167, Asp169, Lys171, Glu176, Asp202, Asn204, Asp206, Glu213, Asp243, Asn245, Asp247, Arg249, Glu254, Asp279, Asp281, Asp283, Lys285, and Glu290 each contribute to the Ca(2+) site. Positions 313 to 316 (HDEF) match the Prevents secretion from ER motif.

It belongs to the CREC family. As to quaternary structure, interacts with ggcx.

The protein resides in the endoplasmic reticulum membrane. It is found in the golgi apparatus. It localises to the secreted. The protein localises to the melanosome. Its subcellular location is the sarcoplasmic reticulum lumen. In terms of biological role, involved in regulation of vitamin K-dependent carboxylation of multiple N-terminal glutamate residues. Seems to inhibit gamma-carboxylase ggcx. Binds 7 calcium ions with a low affinity. The sequence is that of Calumenin-B (calub) from Salmo salar (Atlantic salmon).